A 298-amino-acid polypeptide reads, in one-letter code: Elongation factor Ts (298 aa).

An involved in Mg(2+) ion dislocation from EF-Tu region spans residues 79-82; that stretch reads TDFV.

The protein belongs to the EF-Ts family.

The protein localises to the cytoplasm. Its function is as follows. Associates with the EF-Tu.GDP complex and induces the exchange of GDP to GTP. It remains bound to the aminoacyl-tRNA.EF-Tu.GTP complex up to the GTP hydrolysis stage on the ribosome. In Cereibacter sphaeroides (strain ATCC 17025 / ATH 2.4.3) (Rhodobacter sphaeroides), this protein is Elongation factor Ts.